The following is a 241-amino-acid chain: Beta-nerve growth factor (241 aa).

An N-terminal signal peptide occupies residues 1–18; sequence MSMLFYTLITALLIGIQA. Residues 19-121 constitute a propeptide that is removed on maturation; it reads APHTESNVPA…SFNRTHRSKR (103 aa). Disulfide bonds link Cys-136/Cys-201, Cys-179/Cys-229, and Cys-189/Cys-231. N-linked (GlcNAc...) asparagine glycosylation occurs at Asn-166. Residues Tyr-173 and Lys-209 each contribute to the a 1-acyl-sn-glycero-3-phospho-(1D-myo-inositol) site. Residue Lys-209 coordinates a 1-acyl-sn-glycero-3-phospho-L-serine.

Belongs to the NGF-beta family. As to quaternary structure, homodimer. The homodimer interacts with a single NTRK1 chain. The homodimer interacts with a single NGFR chain. The NGF dimer interacts with a single SORCS2 chain (via extracellular domain). The NGF precursor (proNGF) binds to a receptor complex formed by SORT1 and NGFR, which leads to NGF endocytosis. Both mature NGF and the immature NGF precursor (proNGF) interact with SORCS2 and with the heterodimer formed by SORCS2 and NGFR (via extracellular domains). The NGF precursor (proNGF) has much higher affinity for SORCS2 than mature NGF. The NGF precursor (proNGF) has much higher affinity for SORT1 than mature NGF. Interacts with ADAM10 in a divalent cation-dependent manner. Interacts with SORCS3.

It is found in the secreted. The protein localises to the endosome lumen. In terms of biological role, nerve growth factor is important for the development and maintenance of the sympathetic and sensory nervous systems. Extracellular ligand for the NTRK1 and NGFR receptors, activates cellular signaling cascades to regulate neuronal proliferation, differentiation and survival. The immature NGF precursor (proNGF) functions as a ligand for the heterodimeric receptor formed by SORCS2 and NGFR, and activates cellular signaling cascades that lead to inactivation of RAC1 and/or RAC2, reorganization of the actin cytoskeleton and neuronal growth cone collapse. In contrast to mature NGF, the precursor form (proNGF) promotes neuronal apoptosis (in vitro). Inhibits metalloproteinase-dependent proteolysis of platelet glycoprotein VI. Binds lysophosphatidylinositol and lysophosphatidylserine between the two chains of the homodimer. The lipid-bound form promotes histamine relase from mast cells, contrary to the lipid-free form. The sequence is that of Beta-nerve growth factor (NGF) from Bos taurus (Bovine).